Reading from the N-terminus, the 455-residue chain is Kynurenine 3-monooxygenase (455 aa).

This sequence belongs to the aromatic-ring hydroxylase family. KMO subfamily. FAD is required as a cofactor.

It carries out the reaction L-kynurenine + NADPH + O2 + H(+) = 3-hydroxy-L-kynurenine + NADP(+) + H2O. Its pathway is cofactor biosynthesis; NAD(+) biosynthesis; quinolinate from L-kynurenine: step 1/3. Catalyzes the hydroxylation of L-kynurenine (L-Kyn) to form 3-hydroxy-L-kynurenine (L-3OHKyn). Required for synthesis of quinolinic acid. The protein is Kynurenine 3-monooxygenase of Stenotrophomonas maltophilia (strain K279a).